The sequence spans 140 residues: Large ribosomal subunit protein bL34m (140 aa).

It belongs to the bacterial ribosomal protein bL34 family. In terms of assembly, component of the mitochondrial large ribosomal subunit (mt-LSU). Mature N.crassa 74S mitochondrial ribosomes consist of a small (37S) and a large (54S) subunit. The 37S small subunit contains a 16S ribosomal RNA (16S mt-rRNA) and 32 different proteins. The 54S large subunit contains a 23S rRNA (23S mt-rRNA) and 42 different proteins.

The protein localises to the mitochondrion. In terms of biological role, component of the mitochondrial ribosome (mitoribosome), a dedicated translation machinery responsible for the synthesis of mitochondrial genome-encoded proteins, including at least some of the essential transmembrane subunits of the mitochondrial respiratory chain. The mitoribosomes are attached to the mitochondrial inner membrane and translation products are cotranslationally integrated into the membrane. This Neurospora crassa (strain ATCC 24698 / 74-OR23-1A / CBS 708.71 / DSM 1257 / FGSC 987) protein is Large ribosomal subunit protein bL34m (mrpl34).